The following is a 196-amino-acid chain: 3-isopropylmalate dehydratase small subunit (196 aa).

It belongs to the LeuD family. LeuD type 1 subfamily. Heterodimer of LeuC and LeuD.

The enzyme catalyses (2R,3S)-3-isopropylmalate = (2S)-2-isopropylmalate. Its pathway is amino-acid biosynthesis; L-leucine biosynthesis; L-leucine from 3-methyl-2-oxobutanoate: step 2/4. In terms of biological role, catalyzes the isomerization between 2-isopropylmalate and 3-isopropylmalate, via the formation of 2-isopropylmaleate. The sequence is that of 3-isopropylmalate dehydratase small subunit from Herpetosiphon aurantiacus (strain ATCC 23779 / DSM 785 / 114-95).